A 310-amino-acid chain; its full sequence is CRAL-TRIO domain-containing protein YKL091C (310 aa).

The CRAL-TRIO domain occupies 101–274; sequence ERIKLAKMYP…KYGGTSVLHN (174 aa).

In Saccharomyces cerevisiae (strain ATCC 204508 / S288c) (Baker's yeast), this protein is CRAL-TRIO domain-containing protein YKL091C.